A 161-amino-acid polypeptide reads, in one-letter code: Phosphopantetheine adenylyltransferase (161 aa).

T10 provides a ligand contact to substrate. ATP-binding positions include 10–11 (TF) and H18. Positions 42, 74, and 88 each coordinate substrate. ATP contacts are provided by residues 89–91 (GLR), E99, and 124–130 (WSFISSS).

It belongs to the bacterial CoaD family. As to quaternary structure, homohexamer. Mg(2+) is required as a cofactor.

The protein resides in the cytoplasm. It carries out the reaction (R)-4'-phosphopantetheine + ATP + H(+) = 3'-dephospho-CoA + diphosphate. Its pathway is cofactor biosynthesis; coenzyme A biosynthesis; CoA from (R)-pantothenate: step 4/5. Reversibly transfers an adenylyl group from ATP to 4'-phosphopantetheine, yielding dephospho-CoA (dPCoA) and pyrophosphate. The chain is Phosphopantetheine adenylyltransferase from Serratia proteamaculans (strain 568).